A 27-amino-acid chain; its full sequence is Flagellar filament 31.5 kDa core protein (27 aa).

The protein belongs to the bacterial flagellin family. In terms of assembly, the flagellum consists of an outer layer composed of repeating units of FlaA around a core that contains one or all of five antigenically related polypeptides.

Its subcellular location is the periplasmic flagellum. The protein localises to the periplasm. In terms of biological role, component of the core of the flagella. This chain is Flagellar filament 31.5 kDa core protein, found in Spirochaeta aurantia.